The sequence spans 517 residues: MNKKDKKFNYIFGSEIVNDVKKRLPYYKSDWIDACHYRVLPACLNIYFSNLLPELAFALDMFAKTNNSFGVNEVLLASVLGSVVFALLSSQPLCIVGVTGPITVFNYTVYDIMHDRGTPYFPFLCWICLWSMIFHFIIAIANGVYFVKHITKFSCEIFGLYVAFIYLEKGVQVLCDQLKYGLTNTFLSITIALLFLMVGWLCDTVGKSSLFSYKVRILLLDYGLVASIIFFSGFQHIGKMREVSLAKLPTTKAFEPTLSRSWFIKFWKIPVGDVFLAIPFSIVLTILFYFDHNVSSVMAQDPSFPLTKPAGFHWDFFLLGITTGVSGILGIPAPNGLIPQAPMHTAALCVKRVDYDEDEIEKTHKEVIDRVVEQRASNFIQGLMTVGTMTGPLLLVLHQIPQCVLAGLFWVMGFSAIFGNGITQNVIWMLSDRKVVSKNHTLNHCSSKRVVWLYTILQLIGFGATFAITQVDKASIGFPIIILLLIPFRTYCMPKWFLEEDLEILDENVGIIAYQKV.

11 consecutive transmembrane segments (helical) span residues 68 to 88 (SFGV…FALL), 93 to 113 (LCIV…YDIM), 121 to 141 (FPFL…IAIA), 155 to 175 (CEIF…QVLC), 186 to 206 (FLSI…DTVG), 217 to 237 (ILLL…FQHI), 269 to 289 (IPVG…ILFY), 311 to 331 (GFHW…ILGI), 377 to 397 (SNFI…LLVL), 403 to 423 (CVLA…NGIT), and 449 to 471 (RVVW…ITQV).

This sequence belongs to the anion exchanger (TC 2.A.31) family.

The protein localises to the vacuole membrane. This is Putative transporter C543.05c from Schizosaccharomyces pombe (strain 972 / ATCC 24843) (Fission yeast).